We begin with the raw amino-acid sequence, 431 residues long: Adenylosuccinate lyase (431 aa).

N(6)-(1,2-dicarboxyethyl)-AMP contacts are provided by residues 4-5 (RY), 67-69 (NHD), and 93-94 (TS). Residue His141 is the Proton donor/acceptor of the active site. A N(6)-(1,2-dicarboxyethyl)-AMP-binding site is contributed by Gln212. Ser262 functions as the Proton donor/acceptor in the catalytic mechanism. N(6)-(1,2-dicarboxyethyl)-AMP is bound by residues Ser263, 268–270 (KKN), and 307–311 (SVERY).

It belongs to the lyase 1 family. Adenylosuccinate lyase subfamily. In terms of assembly, homotetramer. Residues from neighboring subunits contribute catalytic and substrate-binding residues to each active site.

The catalysed reaction is N(6)-(1,2-dicarboxyethyl)-AMP = fumarate + AMP. The enzyme catalyses (2S)-2-[5-amino-1-(5-phospho-beta-D-ribosyl)imidazole-4-carboxamido]succinate = 5-amino-1-(5-phospho-beta-D-ribosyl)imidazole-4-carboxamide + fumarate. It functions in the pathway purine metabolism; AMP biosynthesis via de novo pathway; AMP from IMP: step 2/2. Its pathway is purine metabolism; IMP biosynthesis via de novo pathway; 5-amino-1-(5-phospho-D-ribosyl)imidazole-4-carboxamide from 5-amino-1-(5-phospho-D-ribosyl)imidazole-4-carboxylate: step 2/2. Functionally, catalyzes two reactions in de novo purine nucleotide biosynthesis. Catalyzes the breakdown of 5-aminoimidazole- (N-succinylocarboxamide) ribotide (SAICAR or 2-[5-amino-1-(5-phospho-beta-D-ribosyl)imidazole-4-carboxamido]succinate) to 5-aminoimidazole-4-carboxamide ribotide (AICAR or 5-amino-1-(5-phospho-beta-D-ribosyl)imidazole-4-carboxamide) and fumarate, and of adenylosuccinate (ADS or N(6)-(1,2-dicarboxyethyl)-AMP) to adenosine monophosphate (AMP) and fumarate. In Thermotoga maritima (strain ATCC 43589 / DSM 3109 / JCM 10099 / NBRC 100826 / MSB8), this protein is Adenylosuccinate lyase (purB).